The sequence spans 204 residues: Holliday junction branch migration complex subunit RuvA (204 aa).

Positions 1 to 64 (MIGKLKGTID…EDQLKLFGFM (64 aa)) are domain I. The tract at residues 65-143 (TALEREWFNL…AFAGEAINIA (79 aa)) is domain II. Positions 144 to 151 (LKQELGEG) are flexible linker. The tract at residues 152 to 204 (VAAAPVADAVSALTNLGYSRDQAANAVAAAMKTAGDGADSAKLIRLGLKELAR) is domain III.

It belongs to the RuvA family. Homotetramer. Forms an RuvA(8)-RuvB(12)-Holliday junction (HJ) complex. HJ DNA is sandwiched between 2 RuvA tetramers; dsDNA enters through RuvA and exits via RuvB. An RuvB hexamer assembles on each DNA strand where it exits the tetramer. Each RuvB hexamer is contacted by two RuvA subunits (via domain III) on 2 adjacent RuvB subunits; this complex drives branch migration. In the full resolvosome a probable DNA-RuvA(4)-RuvB(12)-RuvC(2) complex forms which resolves the HJ.

Its subcellular location is the cytoplasm. The RuvA-RuvB-RuvC complex processes Holliday junction (HJ) DNA during genetic recombination and DNA repair, while the RuvA-RuvB complex plays an important role in the rescue of blocked DNA replication forks via replication fork reversal (RFR). RuvA specifically binds to HJ cruciform DNA, conferring on it an open structure. The RuvB hexamer acts as an ATP-dependent pump, pulling dsDNA into and through the RuvAB complex. HJ branch migration allows RuvC to scan DNA until it finds its consensus sequence, where it cleaves and resolves the cruciform DNA. The sequence is that of Holliday junction branch migration complex subunit RuvA from Rhizobium etli (strain CIAT 652).